We begin with the raw amino-acid sequence, 510 residues long: Bifunctional pantoate ligase/cytidylate kinase (510 aa).

Positions 1–276 (MNKIIIRKTE…CGKTRLIDHV (276 aa)) are pantoate--beta-alanine ligase. Residue 29–36 (MGNLHDGH) coordinates ATP. The active-site Proton donor is the His36. A (R)-pantoate-binding site is contributed by Gln61. Gln61 is a beta-alanine binding site. Residue 150-153 (GEKD) coordinates ATP. Gln156 provides a ligand contact to (R)-pantoate. 187–190 (FSSR) is a binding site for ATP. A cytidylate kinase region spans residues 277–510 (FLMKRKPIIA…LNIPKEIQLE (234 aa)).

In the N-terminal section; belongs to the pantothenate synthetase family. This sequence in the C-terminal section; belongs to the cytidylate kinase family. Type 1 subfamily.

Its subcellular location is the cytoplasm. It catalyses the reaction (R)-pantoate + beta-alanine + ATP = (R)-pantothenate + AMP + diphosphate + H(+). The catalysed reaction is CMP + ATP = CDP + ADP. The enzyme catalyses dCMP + ATP = dCDP + ADP. Its pathway is cofactor biosynthesis; (R)-pantothenate biosynthesis; (R)-pantothenate from (R)-pantoate and beta-alanine: step 1/1. Its function is as follows. Catalyzes the condensation of pantoate with beta-alanine in an ATP-dependent reaction via a pantoyl-adenylate intermediate. In terms of biological role, catalyzes the transfer of a phosphate group from ATP to either CMP or dCMP to form CDP or dCDP and ADP, respectively. The polypeptide is Bifunctional pantoate ligase/cytidylate kinase (Prochlorococcus marinus subsp. pastoris (strain CCMP1986 / NIES-2087 / MED4)).